Reading from the N-terminus, the 488-residue chain is Peptidoglycan endopeptidase LytF (488 aa).

The N-terminal stretch at 1–26 (MKKKLAAGLTASAIVGTTLVVTPAEA) is a signal peptide. 2 consecutive LysM domains span residues 27–70 (ATIK…TLTI) and 92–135 (SVYT…KLKV). Disordered stretches follow at residues 70-93 (IPGS…GSSV), 137-176 (GTVS…TGTY), and 218-239 (KSSG…TSAT). Composition is skewed to low complexity over residues 72–93 (GSKS…GSSV) and 140–172 (SSSS…SSSS). Residues 174–217 (GTYKVQLGDSLWKIANKVNMSIAELKVLNNLKSDTIYVNQVLKT) enclose the LysM 3 domain. One can recognise a LysM 4 domain in the interval 240–283 (TKYTVKSGDSLWKIANNYNLTVQQIRNINNLKSDVLYVGQVLKL). The interval 286–306 (KASSGSSSSSSSSSNASSGTT) is disordered. The LysM 5 domain maps to 307–350 (TTYTVKSGDSLWVIAQKFNVTAQQIREKNNLKTDVLQVGQKLVI). In terms of domain architecture, NlpC/P60 spans 370–488 (SAKINTMISA…QRYLGAKRYF (119 aa)). Cysteine 400 functions as the Nucleophile in the catalytic mechanism. Histidine 449 acts as the Proton acceptor in catalysis. Residue asparagine 461 is part of the active site.

The protein belongs to the peptidase C40 family.

The protein resides in the secreted. It localises to the cell wall. With respect to regulation, is inhibited in vitro by para-hydroxymercuribenzoate, a sulfydryl inhibitor. In terms of biological role, cell wall hydrolase that cleaves gamma-D-glutamate-meso-diaminopimelate bonds in peptidoglycan. LytF is necessary and sufficient for vegetative daughter cell separation, and also seems to play a role in cell autolysis. The sequence is that of Peptidoglycan endopeptidase LytF (lytF) from Bacillus subtilis (strain 168).